A 122-amino-acid polypeptide reads, in one-letter code: Large ribosomal subunit protein bL12 (122 aa).

This sequence belongs to the bacterial ribosomal protein bL12 family. Homodimer. Part of the ribosomal stalk of the 50S ribosomal subunit. Forms a multimeric L10(L12)X complex, where L10 forms an elongated spine to which 2 to 4 L12 dimers bind in a sequential fashion. Binds GTP-bound translation factors.

Forms part of the ribosomal stalk which helps the ribosome interact with GTP-bound translation factors. Is thus essential for accurate translation. The sequence is that of Large ribosomal subunit protein bL12 from Fusobacterium nucleatum subsp. nucleatum (strain ATCC 25586 / DSM 15643 / BCRC 10681 / CIP 101130 / JCM 8532 / KCTC 2640 / LMG 13131 / VPI 4355).